A 993-amino-acid chain; its full sequence is Replication protein 1a (993 aa).

The segment at 50-408 (RNALDVKDSE…TIVINGMAMQ (359 aa)) is methyltransferase. The Alphavirus-like MT domain occupies 72–289 (HLTQQEQAPH…HKWENVKSFL (218 aa)). Residues 525 to 581 (AEDRKQKAEAASQIPVDEIPDDTAESSDDTPREADTNQKSEPSSPELETLSTQTRSP) form a disordered region. The span at 542–552 (EIPDDTAESSD) shows a compositional bias: acidic residues. Basic and acidic residues predominate over residues 553–562 (DTPREADTNQ). Over residues 564–576 (SEPSSPELETLST) the composition is skewed to low complexity. The (+)RNA virus helicase ATP-binding domain occupies 682–838 (IVNADCVISN…TIIPDETDTA (157 aa)). The tract at residues 711-975 (LVDGVAGCGK…VTRHKKTFRY (265 aa)) is ATP-dependent helicase. Position 714–721 (714–721 (GVAGCGKT)) interacts with ATP. One can recognise a (+)RNA virus helicase C-terminal domain in the interval 839–993 (DTTFRSPQDV…DLIAECLARV (155 aa)).

Belongs to the bromoviridae replication protein 1a family. As to quaternary structure, interacts with RNA-directed RNA polymerase 2a.

The protein localises to the host endoplasmic reticulum membrane. Involved in the virus replication. Contains a helicase domain and a methyltransferase domain. The methyltransferase domain is probably involved in viral RNA capping. Involved in the formation of ER membrane spherular invaginations in which RNA replication complexes form. This is Replication protein 1a from Canna (Florist's daisy).